A 670-amino-acid polypeptide reads, in one-letter code: DNA ligase (670 aa).

NAD(+)-binding positions include D35–D39, S84–L85, and E116. K118 acts as the N6-AMP-lysine intermediate in catalysis. Residues R139, E176, K293, and K317 each coordinate NAD(+). Residues C411, C414, C429, and C435 each contribute to the Zn(2+) site. The BRCT domain occupies V592 to S670.

This sequence belongs to the NAD-dependent DNA ligase family. LigA subfamily. Requires Mg(2+) as cofactor. Mn(2+) serves as cofactor.

It catalyses the reaction NAD(+) + (deoxyribonucleotide)n-3'-hydroxyl + 5'-phospho-(deoxyribonucleotide)m = (deoxyribonucleotide)n+m + AMP + beta-nicotinamide D-nucleotide.. DNA ligase that catalyzes the formation of phosphodiester linkages between 5'-phosphoryl and 3'-hydroxyl groups in double-stranded DNA using NAD as a coenzyme and as the energy source for the reaction. It is essential for DNA replication and repair of damaged DNA. This is DNA ligase from Coxiella burnetii (strain RSA 331 / Henzerling II).